The following is a 126-amino-acid chain: Prefoldin subunit beta (126 aa).

This sequence belongs to the prefoldin subunit beta family. Heterohexamer of two alpha and four beta subunits.

It localises to the cytoplasm. Its function is as follows. Molecular chaperone capable of stabilizing a range of proteins. Seems to fulfill an ATP-independent, HSP70-like function in archaeal de novo protein folding. This chain is Prefoldin subunit beta, found in Pyrobaculum neutrophilum (strain DSM 2338 / JCM 9278 / NBRC 100436 / V24Sta) (Thermoproteus neutrophilus).